Reading from the N-terminus, the 312-residue chain is Malate dehydrogenase (312 aa).

Residues 7-13 (GAAGGIG) and Asp34 contribute to the NAD(+) site. Residues Arg81 and Arg87 each coordinate substrate. NAD(+) is bound by residues Asn94 and 117–119 (ITN). 2 residues coordinate substrate: Asn119 and Arg153. The active-site Proton acceptor is His177. Met227 provides a ligand contact to NAD(+).

Belongs to the LDH/MDH superfamily. MDH type 1 family. Homodimer.

It carries out the reaction (S)-malate + NAD(+) = oxaloacetate + NADH + H(+). Functionally, catalyzes the reversible oxidation of malate to oxaloacetate. The protein is Malate dehydrogenase of Escherichia coli O139:H28 (strain E24377A / ETEC).